We begin with the raw amino-acid sequence, 476 residues long: Bifunctional protein HldE (476 aa).

The tract at residues 1-319 is ribokinase; that stretch reads MKVSLPAFEK…EALALHHGES (319 aa). Position 195–198 (195–198) interacts with ATP; that stretch reads NMSE. Asp264 is an active-site residue. The cytidylyltransferase stretch occupies residues 345-476; that stretch reads MTNGCFDILH…AIIQNIMAKQ (132 aa).

The protein in the N-terminal section; belongs to the carbohydrate kinase PfkB family. This sequence in the C-terminal section; belongs to the cytidylyltransferase family. Homodimer.

It catalyses the reaction D-glycero-beta-D-manno-heptose 7-phosphate + ATP = D-glycero-beta-D-manno-heptose 1,7-bisphosphate + ADP + H(+). It carries out the reaction D-glycero-beta-D-manno-heptose 1-phosphate + ATP + H(+) = ADP-D-glycero-beta-D-manno-heptose + diphosphate. It functions in the pathway nucleotide-sugar biosynthesis; ADP-L-glycero-beta-D-manno-heptose biosynthesis; ADP-L-glycero-beta-D-manno-heptose from D-glycero-beta-D-manno-heptose 7-phosphate: step 1/4. It participates in nucleotide-sugar biosynthesis; ADP-L-glycero-beta-D-manno-heptose biosynthesis; ADP-L-glycero-beta-D-manno-heptose from D-glycero-beta-D-manno-heptose 7-phosphate: step 3/4. Functionally, catalyzes the phosphorylation of D-glycero-D-manno-heptose 7-phosphate at the C-1 position to selectively form D-glycero-beta-D-manno-heptose-1,7-bisphosphate. Its function is as follows. Catalyzes the ADP transfer from ATP to D-glycero-beta-D-manno-heptose 1-phosphate, yielding ADP-D-glycero-beta-D-manno-heptose. This chain is Bifunctional protein HldE, found in Shewanella sp. (strain ANA-3).